We begin with the raw amino-acid sequence, 688 residues long: Phosphatidylinositol 4-phosphate 5-kinase type-1 gamma (688 aa).

Residues 48-71 (GQPGPGHGKKLGHRGVDASGETTY) form a disordered region. Positions 75-443 (TSSTLKGAIQ…RFFKFMSSTV (369 aa)) constitute a PIPK domain. 2 positions are modified to N6-acetyllysine: Lys265 and Lys268. The residue at position 459 (Arg459) is an Asymmetric dimethylarginine; alternate. At Arg459 the chain carries Omega-N-methylarginine; alternate. Residues 525 to 534 (TTLSSTSLSI) are compositionally biased toward low complexity. Disordered regions lie at residues 525 to 565 (TTLS…QEEL) and 592 to 629 (GAGVEVPPSGASAAATVEVDAASQASEPASQASDEEDA). Ser554 is subject to Phosphoserine. The segment covering 602-623 (ASAAATVEVDAASQASEPASQA) has biased composition (low complexity). Tyr635 carries the phosphotyrosine; by EGFR modification. At Tyr671 the chain carries Phosphotyrosine; by CSK. Position 672 is a phosphoserine; by CDK5, MAPK1 and CDK1 (Ser672). Ser682 and Ser686 each carry phosphoserine. The residue at position 688 (Thr688) is a Phosphothreonine.

Interacts with TLN1. Interacts with TLN2; interaction stimulates 1-phosphatidylinositol-4-phosphate 5-kinase activity. May compete with beta-integrins for the same binding site on TLN1 and TLN2. Interacts with ARF6; interaction stimulates 1-phosphatidylinositol-4-phosphate 5-kinase activity. Interacts with AP2B1. Interacts with AP2M1; phosphorylation of PIP5K1C by CSK disrupts the interaction; clathrin competes with PIP5K1C. Interacts with CDH1. Interacts with CSK. Interacts with PLCG1; interaction is abolished upon EGF stimulation. Interacts with LAPTM4B; promotes SNX5 association with LAPTM4B; kinase activity of PIP5K1C is required; interaction is regulated by phosphatidylinositol 4,5-bisphosphate generated by PIP5K1C. Phosphorylation on Ser-672 negatively regulates binding to TLN2 and is strongly stimulated in mitosis. Phosphorylation on Tyr-671 is necessary for targeting to focal adhesions. Phosphorylation on Ser-672 and Tyr-671 are mutually exclusive. Phosphorylated by SYK and CSK. Tyrosine phosphorylation is enhanced by PTK2 signaling. Phosphorylated at Tyr-635 upon EGF stimulation. Some studies suggest that phosphorylation on Tyr-671 enhances binding to tailins (TLN1 and TLN2); others that phosphorylation at Tyr-671 does not directly enhance binding to tailins (TLN1 and TLN2) but may act indirectly by inhibiting phosphorylation at Ser-672. Post-translationally, acetylation at Lys-265 and Lys-268 seems to decrease lipid kinase activity. Deacetylation of these sites by SIRT1 positively regulates the exocytosis of TSH-containing granules from pituitary cells.

It is found in the cell membrane. It localises to the endomembrane system. The protein resides in the cytoplasm. The protein localises to the cell junction. Its subcellular location is the focal adhesion. It is found in the adherens junction. It localises to the cell projection. The protein resides in the ruffle membrane. The protein localises to the phagocytic cup. Its subcellular location is the uropodium. The catalysed reaction is a 1,2-diacyl-sn-glycero-3-phospho-(1D-myo-inositol 4-phosphate) + ATP = a 1,2-diacyl-sn-glycero-3-phospho-(1D-myo-inositol-4,5-bisphosphate) + ADP + H(+). The enzyme catalyses 1-octadecanoyl-2-(5Z,8Z,11Z,14Z)-eicosatetraenoyl-sn-glycero-3-phospho-1D-myo-inositol 4-phosphate + ATP = 1-octadecanoyl-2-(5Z,8Z,11Z,14Z)-eicosatetraenoyl-sn-glycero-3-phospho-1D-myo-inositol 4,5-bisphosphate + ADP + H(+). It catalyses the reaction 1-octadecanoyl-2-(9Z)-octadecenoyl-sn-glycero-3-phospho-1D-myo-inositol 4-phosphate + ATP = 1-octadecanoyl-2-(9Z)-octadecenoyl-sn-glycero-3-phospho-1D-myo-inositol 4,5-bisphosphate + ADP + H(+). It carries out the reaction 1-octadecanoyl-2-(9Z)-octadecenoyl-sn-glycero-3-phospho-1D-myo-inositol + ATP = 1-octadecanoyl-2-(9Z)-octadecenoyl-sn-glycero-3-phospho-1D-myo-inositol 5-phosphate + ADP + H(+). The catalysed reaction is 1-octadecanoyl-2-(9Z,12Z)-octadecadienoyl-sn-glycero-3-phospho-1D-myo-inositol + ATP = 1-octadecanoyl-2-(9Z,12Z)-octadecadienoyl-sn-glycero-3-phospho-1D-myo-inositol 5-phosphate + ADP + H(+). The enzyme catalyses 1-octadecanoyl-2-(5Z,8Z,11Z,14Z-eicosatetraenoyl)-sn-glycero-3-phospho-(1D-myo-inositol) + ATP = 1-octadecanoyl-2-(5Z,8Z,11Z,14Z)-eicosatetraenoyl-sn-glycero-3-phospho-1D-myo-inositol 5-phosphate + ADP + H(+). It catalyses the reaction 1,2-di-(9Z,12Z)-octadecadienoyl-sn-glycero-3-phospho-1D-myo-inositol + ATP = 1,2-di(9Z,12Z)-octadecadienoyl-sn-glycero-3-phospho-1D-myo-inositol 5-phosphate + ADP + H(+). Catalyzes the phosphorylation of phosphatidylinositol 4-phosphate (PtdIns(4)P/PI4P) to form phosphatidylinositol 4,5-bisphosphate (PtdIns(4,5)P2/PIP2), a lipid second messenger that regulates several cellular processes such as signal transduction, vesicle trafficking, actin cytoskeleton dynamics, cell adhesion, and cell motility. PtdIns(4,5)P2 can directly act as a second messenger or can be utilized as a precursor to generate other second messengers: inositol 1,4,5-trisphosphate (IP3), diacylglycerol (DAG) or phosphatidylinositol-3,4,5-trisphosphate (PtdIns(3,4,5)P3/PIP3). PIP5K1A-mediated phosphorylation of PtdIns(4)P is the predominant pathway for PtdIns(4,5)P2 synthesis. Together with PIP5K1A, is required for phagocytosis, both enzymes regulating different types of actin remodeling at sequential steps. Promotes particle attachment by generating the pool of PtdIns(4,5)P2 that induces controlled actin depolymerization to facilitate Fc-gamma-R clustering. Mediates RAC1-dependent reorganization of actin filaments. Required for synaptic vesicle transport. Controls the plasma membrane pool of PtdIns(4,5)P2 implicated in synaptic vesicle endocytosis and exocytosis. Plays a role in endocytosis mediated by clathrin and AP-2 (adaptor protein complex 2). Required for clathrin-coated pits assembly at the synapse. Participates in cell junction assembly. Modulates adherens junctions formation by facilitating CDH1/cadherin trafficking. Required for focal adhesion dynamics. Modulates the targeting of talins (TLN1 and TLN2) to the plasma membrane and their efficient assembly into focal adhesions. Regulates the interaction between talins (TLN1 and TLN2) and beta-integrins. Required for uropodium formation and retraction of the cell rear during directed migration. Has a role in growth factor-stimulated directional cell migration and adhesion. Required for talin assembly into nascent adhesions forming at the leading edge toward the direction of the growth factor. Negative regulator of T-cell activation and adhesion. Negatively regulates integrin alpha-L/beta-2 (LFA-1) polarization and adhesion induced by T-cell receptor. Together with PIP5K1A has a role during embryogenesis and together with PIP5K1B may have a role immediately after birth. This chain is Phosphatidylinositol 4-phosphate 5-kinase type-1 gamma, found in Rattus norvegicus (Rat).